Here is a 324-residue protein sequence, read N- to C-terminus: Transmembrane protein 171 (324 aa).

4 consecutive transmembrane segments (helical) span residues 22–42, 57–77, 113–133, and 160–180; these read IFCFFVFGAVLLCVGVLLSIF, MVLKVAGPACAVVGLGAVILA, LIFGFLFLTSGMLISVLGIWV, and FLSLQIMGPLIVLVGLCFFVV. Over residues 229 to 239 the composition is skewed to low complexity; it reads PESSASAVAES. 2 disordered regions span residues 229 to 248 and 279 to 304; these read PESSASAVAESPGTNSLLPN and YTISGTNSSSEASHTPHLPSELPPRY. A compositionally biased stretch (polar residues) spans 279–291; the sequence is YTISGTNSSSEAS.

The protein resides in the membrane. This chain is Transmembrane protein 171 (TMEM171), found in Homo sapiens (Human).